Reading from the N-terminus, the 267-residue chain is GTP cyclohydrolase MptA (267 aa).

This sequence belongs to the GTP cyclohydrolase IV family. In terms of assembly, homodimer. It depends on Fe(2+) as a cofactor.

The catalysed reaction is GTP + H2O = 7,8-dihydroneopterin 2',3'-cyclic phosphate + formate + diphosphate + H(+). It functions in the pathway cofactor biosynthesis; 5,6,7,8-tetrahydromethanopterin biosynthesis. Its function is as follows. Converts GTP to 7,8-dihydro-D-neopterin 2',3'-cyclic phosphate, the first intermediate in the biosynthesis of coenzyme methanopterin. This Pyrococcus furiosus (strain ATCC 43587 / DSM 3638 / JCM 8422 / Vc1) protein is GTP cyclohydrolase MptA.